The primary structure comprises 400 residues: Ribosomal RNA large subunit methyltransferase I (400 aa).

Residues 6 to 84 (FPRLVLAKGR…NEAIDSAFFE (79 aa)) form the PUA domain.

This sequence belongs to the methyltransferase superfamily. RlmI family.

The protein localises to the cytoplasm. It catalyses the reaction cytidine(1962) in 23S rRNA + S-adenosyl-L-methionine = 5-methylcytidine(1962) in 23S rRNA + S-adenosyl-L-homocysteine + H(+). Its function is as follows. Specifically methylates the cytosine at position 1962 (m5C1962) of 23S rRNA. The polypeptide is Ribosomal RNA large subunit methyltransferase I (Klebsiella pneumoniae (strain 342)).